The following is a 510-amino-acid chain: MIWHVQNENFILDSTRIFMKAFHLLLFDGSLIFPECILIFGLILLLMIDSTSDQKDIPWLYFISSTSLVMSITALLFRWREEPMISFSGNFQTNNFNEIFQFLILLCSTLCIPLSVEYIECTEMALTEFLLFILTATLGGMFLCGANDLITIFVAPECFSLCSYLLSGYTKKDVRSNEATTKYLLMGGASSSILVHGFSWLYGSSGGEIELQEIVNGLINTQMYNSPGISIALIFITVGIGFKLSPAPSHQWTPDVYEGSPTPVVAFLSVTSKVAASASATRIFDIPFYFSSNEWHLLLEILAILSMILGNLIAITQTSMKRMLAYSSIGQIGYVIIGIIVGDSNDGYASMITYMLFYISMNLGTFACIVLFGLRTGTDNIRDYAGLYTKDPFLALSLALCLLSLGGLPPLAGFFGKIYLFWCGWQAGLYFLVLIGLLTSVLSIYYYLKIIKLLMTGRNQEITPHVRNYRRSPLRSKNSIEFSMIVCVIASTIPGISMNPIITIAQDTLF.

13 helical membrane-spanning segments follow: residues 24–44 (LLLFDGSLIFPECILIFGLIL), 57–77 (IPWLYFISSTSLVMSITALLF), 99–119 (IFQFLILLCSTLCIPLSVEYI), 124–144 (MALTEFLLFILTATLGGMFLC), 149–169 (LITIFVAPECFSLCSYLLSGY), 183–203 (YLLMGGASSSILVHGFSWLYG), 227–247 (PGISIALIFITVGIGFKLSPA), 295–315 (WHLLLEILAILSMILGNLIAI), 323–343 (MLAYSSIGQIGYVIIGIIVGD), 354–374 (YMLFYISMNLGTFACIVLFGL), 395–415 (ALSLALCLLSLGGLPPLAGFF), 418–438 (IYLFWCGWQAGLYFLVLIGLL), and 484–504 (MIVCVIASTIPGISMNPIITI).

Belongs to the complex I subunit 2 family. As to quaternary structure, NDH is composed of at least 16 different subunits, 5 of which are encoded in the nucleus.

Its subcellular location is the plastid. The protein localises to the chloroplast thylakoid membrane. It catalyses the reaction a plastoquinone + NADH + (n+1) H(+)(in) = a plastoquinol + NAD(+) + n H(+)(out). It carries out the reaction a plastoquinone + NADPH + (n+1) H(+)(in) = a plastoquinol + NADP(+) + n H(+)(out). Functionally, NDH shuttles electrons from NAD(P)H:plastoquinone, via FMN and iron-sulfur (Fe-S) centers, to quinones in the photosynthetic chain and possibly in a chloroplast respiratory chain. The immediate electron acceptor for the enzyme in this species is believed to be plastoquinone. Couples the redox reaction to proton translocation, and thus conserves the redox energy in a proton gradient. This Spinacia oleracea (Spinach) protein is NAD(P)H-quinone oxidoreductase subunit 2 A, chloroplastic.